A 180-amino-acid polypeptide reads, in one-letter code: LDLR chaperone boca (180 aa).

The first 18 residues, 1 to 18, serve as a signal peptide directing secretion; that stretch reads MQTRLVLLLLALTPLVLA. The segment covering 48–61 has biased composition (acidic residues); the sequence is QWEEDEEPLEDDEL. The interval 48 to 78 is disordered; sequence QWEEDEEPLEDDELPEHLRPQPKLDLSNLDS. Positions 93–166 are structured core; sequence TLMTFVSVTG…QERCKGVTIE (74 aa). The Prevents secretion from ER motif lies at 177–180; it reads KDEL.

Belongs to the MESD family. In terms of assembly, monomer. Interacts with Arrow and Yolkless.

The protein resides in the endoplasmic reticulum. Chaperone specifically assisting the folding of beta-propeller/EGF modules within the family of low-density lipoprotein receptors (LDLRs). Acts as a modulator of the Wg pathway, since some LDLRs are coreceptors for the canonical Wnt pathway. In Drosophila melanogaster (Fruit fly), this protein is LDLR chaperone boca (boca).